Consider the following 302-residue polypeptide: Deoxyhypusine hydroxylase (302 aa).

At methionine 1 the chain carries N-acetylmethionine. HEAT-like PBS-type repeat units lie at residues 54 to 80, 87 to 113, 175 to 201, 206 to 232, and 239 to 265; these read LKHE…VLQD, VRHE…YSTD, ERYR…GLQC, FRHE…TLAR, and VRHE…HIED. Fe cation-binding residues include histidine 56, histidine 89, and glutamate 90. 3 residues coordinate Fe cation: histidine 208, histidine 241, and glutamate 242.

Belongs to the deoxyhypusine hydroxylase family. Fe(2+) serves as cofactor.

It catalyses the reaction [eIF5A protein]-deoxyhypusine + AH2 + O2 = [eIF5A protein]-hypusine + A + H2O. The protein operates within protein modification; eIF5A hypusination. Functionally, catalyzes the hydroxylation of the N(6)-(4-aminobutyl)-L-lysine intermediate produced by deoxyhypusine synthase/DHPS on a critical lysine of the eukaryotic translation initiation factor 5A/eIF-5A. This is the second step of the post-translational modification of that lysine into an unusual amino acid residue named hypusine. Hypusination is unique to mature eIF-5A factor and is essential for its function. The polypeptide is Deoxyhypusine hydroxylase (Mus musculus (Mouse)).